Here is a 593-residue protein sequence, read N- to C-terminus: Pentatricopeptide repeat-containing protein At5g24830 (593 aa).

12 PPR repeats span residues 120-154, 155-189, 190-224, 225-256, 264-298, 299-333, 334-368, 369-403, 404-438, 439-473, 474-508, and 509-543; these read CLSI…GVIP, GLIT…GPSP, NCVS…GIRP, NRVT…ILDS, DIVI…NVPA, DSVV…GVNP, DVFT…GVAP, DQIS…SLLP, EVLL…GVKP, NVYT…KIHP, DTTT…GCQP, and DIIT…GITI.

The protein belongs to the PPR family. P subfamily.

This chain is Pentatricopeptide repeat-containing protein At5g24830, found in Arabidopsis thaliana (Mouse-ear cress).